Reading from the N-terminus, the 187-residue chain is Elongation factor P (187 aa).

The protein belongs to the elongation factor P family.

The protein localises to the cytoplasm. It participates in protein biosynthesis; polypeptide chain elongation. Its function is as follows. Involved in peptide bond synthesis. Stimulates efficient translation and peptide-bond synthesis on native or reconstituted 70S ribosomes in vitro. Probably functions indirectly by altering the affinity of the ribosome for aminoacyl-tRNA, thus increasing their reactivity as acceptors for peptidyl transferase. The sequence is that of Elongation factor P from Rhodospirillum rubrum (strain ATCC 11170 / ATH 1.1.1 / DSM 467 / LMG 4362 / NCIMB 8255 / S1).